The chain runs to 425 residues: 2,3-diketo-L-gulonate TRAP transporter large permease protein YiaN (425 aa).

11 helical membrane passes run 3–23, 54–74, 93–113, 139–159, 170–190, 209–229, 235–255, 277–297, 314–334, 355–375, and 399–419; these read VLIF…IAWA, FSLL…AGGL, LGYV…SAVA, LIAS…FIIF, LFMA…LTWW, IWHS…IIGG, FTPT…ATVI, VVMF…IAEL, LLFI…DLTP, IYFG…PPIG, and YVLV…LIIL.

This sequence belongs to the TRAP transporter large permease family. In terms of assembly, the complex comprises the extracytoplasmic solute receptor protein YiaO, and the two transmembrane proteins YiaM and YiaN.

The protein localises to the cell inner membrane. Part of the tripartite ATP-independent periplasmic (TRAP) transport system YiaMNO involved in the uptake of 2,3-diketo-L-gulonate. In Escherichia coli (strain K12), this protein is 2,3-diketo-L-gulonate TRAP transporter large permease protein YiaN (yiaN).